Reading from the N-terminus, the 556-residue chain is MGDNNNSSNFIKNIIIEDLKSGEYEKVVTRFPPEPNGYLHIGHAKSIVLNFSLADEFEGKVNLRFDDTNPSKEDVEYVESIKEDVKWLGYNWDNLCFASSYFERMYEYAVFLIKKGKAYVCDLTADEIREYRGTLTKPGKESPYRNRDVEENFKLFEGMKNGEFKDGEKVLRAKIDMASPNINMRDPVLYRIAHASHHNTGDRWCIYPMYDFAHPLEDAIEGVTHSICTLEFEDHRPLYDWIIQECEIENRPKQIEFARLNMTNTVMSKRKLKQLVDENFVDGWDDPRMPTIAGLRRRGFTPESIRNFCRAIGVSKASSIVDSQMLDYFLRDDLEKEAPRTMAILNPLKVVITNYPEGKTETFKIENNPDDASAGVREVPFSREIYIEQEDFMENPPKKYYRLFPGNEVRLKSAYFIKCTEAIKDKDGNVIELRCTYDPASKGGNSPDGRKVRGTLHWINVDTAIPAEIRLYEPLILEQQEKEGEEDLFLDHVNPNSLKVVKGFVEPDMKHVKSDEKFQFFRHGYFVLDGKCSKNGELVFNRIVSLKSSFKIPENK.

Residues 33–43 (PEPNGYLHIGH) carry the 'HIGH' region motif. ATP contacts are provided by residues 34-36 (EPN) and 40-46 (HIGHAKS). L-glutamine is bound by residues Asp-66 and Tyr-210. ATP-binding positions include Thr-229, 259–260 (RL), and 267–269 (MSK). The short motif at 266–270 (VMSKR) is the 'KMSKS' region element.

The protein belongs to the class-I aminoacyl-tRNA synthetase family. In terms of assembly, monomer.

The protein localises to the cytoplasm. The catalysed reaction is tRNA(Gln) + L-glutamine + ATP = L-glutaminyl-tRNA(Gln) + AMP + diphosphate. In Clostridium kluyveri (strain ATCC 8527 / DSM 555 / NBRC 12016 / NCIMB 10680 / K1), this protein is Glutamine--tRNA ligase.